Reading from the N-terminus, the 877-residue chain is DNA mismatch repair protein MutS (877 aa).

Position 630-637 (630-637) interacts with ATP; the sequence is GPNMAGKS.

This sequence belongs to the DNA mismatch repair MutS family.

Its function is as follows. This protein is involved in the repair of mismatches in DNA. It is possible that it carries out the mismatch recognition step. This protein has a weak ATPase activity. The sequence is that of DNA mismatch repair protein MutS from Jannaschia sp. (strain CCS1).